The sequence spans 254 residues: Hydroxyacylglutathione hydrolase (254 aa).

The Zn(2+) site is built by His53, His55, Asp57, His58, His111, Asp128, and His166.

This sequence belongs to the metallo-beta-lactamase superfamily. Glyoxalase II family. Monomer. The cofactor is Zn(2+).

It catalyses the reaction an S-(2-hydroxyacyl)glutathione + H2O = a 2-hydroxy carboxylate + glutathione + H(+). The protein operates within secondary metabolite metabolism; methylglyoxal degradation; (R)-lactate from methylglyoxal: step 2/2. Functionally, thiolesterase that catalyzes the hydrolysis of S-D-lactoyl-glutathione to form glutathione and D-lactic acid. The chain is Hydroxyacylglutathione hydrolase from Aeromonas hydrophila subsp. hydrophila (strain ATCC 7966 / DSM 30187 / BCRC 13018 / CCUG 14551 / JCM 1027 / KCTC 2358 / NCIMB 9240 / NCTC 8049).